Consider the following 410-residue polypeptide: Calsequestrin-2 (410 aa).

The first 19 residues, 1–19, serve as a signal peptide directing secretion; sequence MKRTHLFIAGLYLLASCRA. The interval 221–242 is calcium regulated hydrophobic site; the sequence is MDEPIAIPDKPYTEEELVEFVK. Tyr282 carries the post-translational modification Phosphotyrosine. N-linked (GlcNAc...) asparagine glycans are attached at residues Asn335 and Asn395. A disordered region spans residues 364-410; sequence DVLSGKINTEDDDNEEGDDGDDDEDDDDDDGNNSDEESNDDSDDDDE. The segment covering 373–410 has biased composition (acidic residues); the sequence is EDDDNEEGDDGDDDEDDDDDDGNNSDEESNDDSDDDDE. 3 positions are modified to phosphoserine; by CK2: Ser397, Ser401, and Ser405.

This sequence belongs to the calsequestrin family. Interacts with ASPH. Monomer, homodimer and homooligomer. Mostly monomeric in the absence of calcium. Forms higher oligomers in a calcium-dependent manner. Dimers associate to form tetramers, that then form linear homomer chains. Interacts with TRDN. Phosphorylation in the C-terminus, probably by CK2, moderately increases calcium buffering capacity. In terms of processing, N-glycosylated. As to expression, detected in heart muscle (at protein level).

The protein localises to the sarcoplasmic reticulum lumen. Calsequestrin is a high-capacity, moderate affinity, calcium-binding protein and thus acts as an internal calcium store in muscle. Calcium ions are bound by clusters of acidic residues at the protein surface, especially at the interface between subunits. Can bind around 60 Ca(2+) ions. Regulates the release of lumenal Ca(2+) via the calcium release channel RYR2; this plays an important role in triggering muscle contraction. Plays a role in excitation-contraction coupling in the heart and in regulating the rate of heart beats. This chain is Calsequestrin-2 (CASQ2), found in Canis lupus familiaris (Dog).